The primary structure comprises 178 residues: ATP synthase subunit delta (178 aa).

This sequence belongs to the ATPase delta chain family. In terms of assembly, F-type ATPases have 2 components, F(1) - the catalytic core - and F(0) - the membrane proton channel. F(1) has five subunits: alpha(3), beta(3), gamma(1), delta(1), epsilon(1). F(0) has three main subunits: a(1), b(2) and c(10-14). The alpha and beta chains form an alternating ring which encloses part of the gamma chain. F(1) is attached to F(0) by a central stalk formed by the gamma and epsilon chains, while a peripheral stalk is formed by the delta and b chains.

The protein resides in the cell inner membrane. Functionally, f(1)F(0) ATP synthase produces ATP from ADP in the presence of a proton or sodium gradient. F-type ATPases consist of two structural domains, F(1) containing the extramembraneous catalytic core and F(0) containing the membrane proton channel, linked together by a central stalk and a peripheral stalk. During catalysis, ATP synthesis in the catalytic domain of F(1) is coupled via a rotary mechanism of the central stalk subunits to proton translocation. In terms of biological role, this protein is part of the stalk that links CF(0) to CF(1). It either transmits conformational changes from CF(0) to CF(1) or is implicated in proton conduction. The polypeptide is ATP synthase subunit delta (Nitrosomonas europaea (strain ATCC 19718 / CIP 103999 / KCTC 2705 / NBRC 14298)).